A 77-amino-acid polypeptide reads, in one-letter code: U8-lycotoxin-Ls1p (77 aa).

Residues 1 to 20 form the signal peptide; sequence MKLMIFTGLVLFAIVSLIEA. The propeptide occupies 21–26; the sequence is QAENEK.

The protein belongs to the neurotoxin 19 (CSTX) family. 08 (U8-Lctx) subfamily. Contains 4 disulfide bonds. As to expression, expressed by the venom gland.

The protein localises to the secreted. In Lycosa singoriensis (Wolf spider), this protein is U8-lycotoxin-Ls1p.